We begin with the raw amino-acid sequence, 128 residues long: uncharacterized protein (128 aa).

3 consecutive transmembrane segments (helical) span residues 1 to 21 (MLVF…LIFL), 51 to 71 (VRVE…AILG), and 76 to 96 (ANFL…VYYV).

The protein localises to the membrane. This is an uncharacterized protein from Saccharomyces cerevisiae (strain ATCC 204508 / S288c) (Baker's yeast).